The following is a 590-amino-acid chain: Pentatricopeptide repeat-containing protein At2g46050, mitochondrial (590 aa).

Residues 1 to 109 constitute a mitochondrion transit peptide; that stretch reads MRFTFLRSTR…RNIVTWNILI (109 aa). 11 PPR repeats span residues 141–175, 176–206, 207–241, 244–266, 275–305, 306–340, 341–375, 376–406, 407–437, 441–471, and 477–507; these read DHVSFMGLIRLCTDSTNMKAGIQLHCLMVKQGLES, SCFPSTSLVHFYGKCGLIVEARRVFEAVLDR, DLVLWNALVSSYVLNGMIDEAFGLLKLMGSDKNRF, DYFTFSSLLSACRIEQGKQIHAI, DIPVATALLNMYAKSNHLSDARECFESMVVR, NVVSWNAMIVGFAQNGEGREAMRLFGQMLLENLQP, DELTFASVLSSCAKFSAIWEIKQVQAMVTKKGSAD, FLSVANSLISSYSRNGNLSEALLCFHSIREP, DLVSWTSVIGALASHGFAEESLQMFESMLQK, DKITFLEVLSACSHGGLVQEGLRCFKRMTEF, and EDEHYTCLIDLLGRAGFIDEASDVLNSMPTE. The segment at 512-588 is type E motif; that stretch reads ALAAFTGGCN…TPGCSWLGDY (77 aa).

This sequence belongs to the PPR family. PCMP-E subfamily.

It is found in the mitochondrion. In Arabidopsis thaliana (Mouse-ear cress), this protein is Pentatricopeptide repeat-containing protein At2g46050, mitochondrial (PCMP-E39).